The primary structure comprises 209 residues: Molybdenum cofactor guanylyltransferase (209 aa).

Residues 16 to 18 (LAG), K28, N56, D69, and D103 contribute to the GTP site. D103 contacts Mg(2+).

It belongs to the MobA family. In terms of assembly, monomer. Requires Mg(2+) as cofactor.

The protein resides in the cytoplasm. The enzyme catalyses Mo-molybdopterin + GTP + H(+) = Mo-molybdopterin guanine dinucleotide + diphosphate. Functionally, transfers a GMP moiety from GTP to Mo-molybdopterin (Mo-MPT) cofactor (Moco or molybdenum cofactor) to form Mo-molybdopterin guanine dinucleotide (Mo-MGD) cofactor. In Rhizobium johnstonii (strain DSM 114642 / LMG 32736 / 3841) (Rhizobium leguminosarum bv. viciae), this protein is Molybdenum cofactor guanylyltransferase.